A 312-amino-acid polypeptide reads, in one-letter code: tRNA dimethylallyltransferase (312 aa).

17-24 (GPTASGKS) lines the ATP pocket. 19 to 24 (TASGKS) is a binding site for substrate.

It belongs to the IPP transferase family. In terms of assembly, monomer. Requires Mg(2+) as cofactor.

It carries out the reaction adenosine(37) in tRNA + dimethylallyl diphosphate = N(6)-dimethylallyladenosine(37) in tRNA + diphosphate. Catalyzes the transfer of a dimethylallyl group onto the adenine at position 37 in tRNAs that read codons beginning with uridine, leading to the formation of N6-(dimethylallyl)adenosine (i(6)A). This is tRNA dimethylallyltransferase from Zymomonas mobilis subsp. mobilis (strain ATCC 31821 / ZM4 / CP4).